The primary structure comprises 384 residues: S-adenosylmethionine synthase (384 aa).

His-15 contacts ATP. Mg(2+) is bound at residue Asp-17. Glu-43 provides a ligand contact to K(+). 2 residues coordinate L-methionine: Glu-56 and Gln-99. Residues 99–109 are flexible loop; it reads QSPDINQGVDK. Residues 164–166, 230–231, Asp-239, 245–246, Ala-262, and Lys-266 contribute to the ATP site; these read DAK, RF, and RK. Asp-239 serves as a coordination point for L-methionine. Residue Lys-270 coordinates L-methionine.

Belongs to the AdoMet synthase family. As to quaternary structure, homotetramer; dimer of dimers. It depends on Mg(2+) as a cofactor. The cofactor is K(+).

It localises to the cytoplasm. The enzyme catalyses L-methionine + ATP + H2O = S-adenosyl-L-methionine + phosphate + diphosphate. Its pathway is amino-acid biosynthesis; S-adenosyl-L-methionine biosynthesis; S-adenosyl-L-methionine from L-methionine: step 1/1. Functionally, catalyzes the formation of S-adenosylmethionine (AdoMet) from methionine and ATP. The overall synthetic reaction is composed of two sequential steps, AdoMet formation and the subsequent tripolyphosphate hydrolysis which occurs prior to release of AdoMet from the enzyme. The sequence is that of S-adenosylmethionine synthase from Aliivibrio fischeri (strain ATCC 700601 / ES114) (Vibrio fischeri).